A 399-amino-acid chain; its full sequence is MKPYDLPDARGHFGPYGGVFVAETLMHALDELRAAYDQCRVDPSFIDEFNYELKHFVGRPSPVYHASRWSQRLGGAQIWFKREDLNHTGAHKVNNCIGQALLARRMGKPRVIAETGAGQHGVATATVAARYGMECVVFMGSEDVRRQASNVYRMKLLGATVVPVDSGSRTLKDALNEAMRDWVTNIENTFYIIGTVAGPDPYPRMVRDFQTVIGQECLTQMPEVIGRQPDYVVAAVGGGSNAMGIFHPYIPYENVRLIGVEAAGEGMETGRHAASLAAGQIGVLHGNRTYVMQNADGQVQETHSVSAGLDYPGVGPEHAWLKDSGRAEYAGITDDEALAAFHDCCRIEGIMPALESAHAIAQAVKMAPALSKDKVILVNLSGRGDKDMHTVAERAGLQL.

Lys-92 bears the N6-(pyridoxal phosphate)lysine mark.

It belongs to the TrpB family. As to quaternary structure, tetramer of two alpha and two beta chains. The cofactor is pyridoxal 5'-phosphate.

The enzyme catalyses (1S,2R)-1-C-(indol-3-yl)glycerol 3-phosphate + L-serine = D-glyceraldehyde 3-phosphate + L-tryptophan + H2O. It participates in amino-acid biosynthesis; L-tryptophan biosynthesis; L-tryptophan from chorismate: step 5/5. Its function is as follows. The beta subunit is responsible for the synthesis of L-tryptophan from indole and L-serine. This is Tryptophan synthase beta chain from Bordetella bronchiseptica (strain ATCC BAA-588 / NCTC 13252 / RB50) (Alcaligenes bronchisepticus).